A 449-amino-acid polypeptide reads, in one-letter code: Probable D-serine dehydratase (449 aa).

An N6-(pyridoxal phosphate)lysine modification is found at Lys-119.

This sequence belongs to the serine/threonine dehydratase family. DsdA subfamily. Requires pyridoxal 5'-phosphate as cofactor.

The enzyme catalyses D-serine = pyruvate + NH4(+). The protein is Probable D-serine dehydratase of Pseudomonas putida (strain ATCC 700007 / DSM 6899 / JCM 31910 / BCRC 17059 / LMG 24140 / F1).